The chain runs to 134 residues: Small ribosomal subunit protein uS11 (134 aa).

Residues 113 to 122 (SSITDATPQP) show a composition bias toward polar residues. The segment at 113–134 (SSITDATPQPHNGCRPTKRRKV) is disordered.

Belongs to the universal ribosomal protein uS11 family. Part of the 30S ribosomal subunit. Interacts with proteins S7 and S18. Binds to IF-3.

Its function is as follows. Located on the platform of the 30S subunit, it bridges several disparate RNA helices of the 16S rRNA. Forms part of the Shine-Dalgarno cleft in the 70S ribosome. This chain is Small ribosomal subunit protein uS11, found in Corynebacterium aurimucosum (strain ATCC 700975 / DSM 44827 / CIP 107346 / CN-1) (Corynebacterium nigricans).